The sequence spans 49 residues: Large ribosomal subunit protein bL33A (49 aa).

It belongs to the bacterial ribosomal protein bL33 family.

In Enterococcus faecalis (strain ATCC 700802 / V583), this protein is Large ribosomal subunit protein bL33A (rpmG1).